Here is a 79-residue protein sequence, read N- to C-terminus: Sulfur carrier protein TusA (79 aa).

Residue cysteine 17 is the Cysteine persulfide intermediate of the active site.

It belongs to the sulfur carrier protein TusA family.

The protein localises to the cytoplasm. Functionally, sulfur carrier protein which probably makes part of a sulfur-relay system. The chain is Sulfur carrier protein TusA from Haemophilus influenzae (strain ATCC 51907 / DSM 11121 / KW20 / Rd).